We begin with the raw amino-acid sequence, 802 residues long: ATP-dependent zinc metalloprotease FTSH 3, mitochondrial (802 aa).

Residues 1–21 constitute a mitochondrion transit peptide; it reads MSLSSLSRALARSARSSRQRQ. Low complexity predominate over residues 1 to 23; sequence MSLSSLSRALARSARSSRQRQGS. Disordered regions lie at residues 1–33 and 85–120; these read MSLS…GLRA and DKSK…SGDQ. Over residues 85 to 113 the composition is skewed to basic and acidic residues; that stretch reads DKSKKNHGKHSEEENKGKGDESDKSDSKK. Residues 133 to 153 traverse the membrane as a helical segment; it reads MIAPLFLFGLLLLSASASSSE. 360–367 is an ATP binding site; that stretch reads GPPGTGKT. Residue His-585 coordinates Zn(2+). Glu-586 is an active-site residue. Zn(2+)-binding residues include His-589 and Asp-661. Positions 773-802 are disordered; sequence KQGFQDEDSNRNAELSNADGASSLGEAVAS.

The protein in the N-terminal section; belongs to the AAA ATPase family. It in the C-terminal section; belongs to the peptidase M41 family. Zn(2+) serves as cofactor.

It localises to the mitochondrion inner membrane. Its function is as follows. Probable ATP-dependent zinc metallopeptidase. The sequence is that of ATP-dependent zinc metalloprotease FTSH 3, mitochondrial (FTSH3) from Oryza sativa subsp. japonica (Rice).